The following is a 677-amino-acid chain: Zinc finger CCCH domain-containing protein 23 (677 aa).

A disordered region spans residues 66–117 (PPQAASSSPTVPAAHSPFLLSRQNSGRCPAPSPSSWAQAQPFSRSNSMGNGG). Positions 69 to 82 (AASSSPTVPAAHSP) are enriched in low complexity. Residues 98–113 (PSSWAQAQPFSRSNSM) show a composition bias toward polar residues. The C3H1-type zinc finger occupies 228-255 (GFGWKPCLYYARGFCKNGSTCRFVHGGL). The region spanning 359-435 (RQIYLTFPAD…RVLVKPYKEK (77 aa)) is the RRM domain. Positions 480–513 (ANELMLRRKLEEQQQAAELQQAIDLHSRRLIGLQ) form a coiled coil. Over residues 535-562 (TPITNAFTSGQPGATTIVESPPSSTGQL) the composition is skewed to polar residues. The disordered stretch occupies residues 535–607 (TPITNAFTSG…EHNLPDSPFA (73 aa)). Residues 589–601 (RNADSDQSGEHNL) are compositionally biased toward basic and acidic residues.

In Oryza sativa subsp. japonica (Rice), this protein is Zinc finger CCCH domain-containing protein 23.